Reading from the N-terminus, the 149-residue chain is Deoxyuridine 5'-triphosphate nucleotidohydrolase (149 aa).

Substrate contacts are provided by residues 68–70 (RSG), N81, 85–87 (LID), and M95.

The protein belongs to the dUTPase family. Mg(2+) is required as a cofactor.

The enzyme catalyses dUTP + H2O = dUMP + diphosphate + H(+). The protein operates within pyrimidine metabolism; dUMP biosynthesis; dUMP from dCTP (dUTP route): step 2/2. Its function is as follows. This enzyme is involved in nucleotide metabolism: it produces dUMP, the immediate precursor of thymidine nucleotides and it decreases the intracellular concentration of dUTP so that uracil cannot be incorporated into DNA. This Bordetella bronchiseptica (strain ATCC BAA-588 / NCTC 13252 / RB50) (Alcaligenes bronchisepticus) protein is Deoxyuridine 5'-triphosphate nucleotidohydrolase.